A 502-amino-acid polypeptide reads, in one-letter code: L-amino-acid oxidase BmooLAAO-I (502 aa).

An N-terminal signal peptide occupies residues 1–18; sequence MNVFFTFSLLFLAALGSC. A disulfide bridge links Cys-28 with Cys-191. FAD-binding positions include 61–62, 81–82, Arg-89, and 105–108; these read MS, EA, and GPMR. Arg-108 provides a ligand contact to substrate. The N-linked (GlcNAc...) asparagine glycan is linked to Asn-190. His-241 contacts substrate. Val-279 contributes to the FAD binding site. Cys-349 and Cys-430 are oxidised to a cystine. A substrate-binding site is contributed by Tyr-390. FAD contacts are provided by residues Glu-475 and 482–487; that span reads GWIDST. A substrate-binding site is contributed by 482–483; that stretch reads GW.

This sequence belongs to the flavin monoamine oxidase family. FIG1 subfamily. Homodimer; non-covalently linked. It depends on FAD as a cofactor. In terms of processing, N-glycosylated. The enzymatic activity is not affected by deglycosylation. Expressed by the venom gland.

Its subcellular location is the secreted. It carries out the reaction an L-alpha-amino acid + O2 + H2O = a 2-oxocarboxylate + H2O2 + NH4(+). The enzyme catalyses L-leucine + O2 + H2O = 4-methyl-2-oxopentanoate + H2O2 + NH4(+). It catalyses the reaction L-phenylalanine + O2 + H2O = 3-phenylpyruvate + H2O2 + NH4(+). The catalysed reaction is L-tryptophan + O2 + H2O = indole-3-pyruvate + H2O2 + NH4(+). It carries out the reaction L-methionine + O2 + H2O = 4-methylsulfanyl-2-oxobutanoate + H2O2 + NH4(+). The enzyme catalyses L-isoleucine + O2 + H2O = (S)-3-methyl-2-oxopentanoate + H2O2 + NH4(+). It catalyses the reaction L-histidine + O2 + H2O = 3-(imidazol-5-yl)pyruvate + H2O2 + NH4(+). The catalysed reaction is L-tyrosine + O2 + H2O = 3-(4-hydroxyphenyl)pyruvate + H2O2 + NH4(+). It carries out the reaction L-alanine + O2 + H2O = pyruvate + H2O2 + NH4(+). The enzyme catalyses L-valine + O2 + H2O = 3-methyl-2-oxobutanoate + H2O2 + NH4(+). With respect to regulation, its enzymatic activities is reduced when it is exposed to Ca(2+), Zn(2+), Al(3+), Cu(2+) or Ni(2+) salts. Catalyzes an oxidative deamination of predominantly hydrophobic and aromatic L-amino acids, thus producing hydrogen peroxide that may contribute to the toxicity of the venom. Shows very high activity on L-Met, and L-Leu, high activity on L-Ile, L-Phe and L-Tyr and moderate activity on L-His, L-Val and L-Ala. Exhibits diverse biological activities, such as edema, apoptosis of tumor cell lines, antibacterial activities against both Gram-positive and Gram-negative bacteria, as well as induction of platelet aggregation. Effects of snake L-amino oxidases on platelets are controversial, since they either induce aggregation or inhibit agonist-induced aggregation. These different effects are probably due to different experimental conditions. Unlike other snake venom L-amino acid oxidases, does not induce hemorrhage. It may also induce hemolysis. Has parasiticidal activities against and leishmania, as a result of enzyme-catalyzed hydrogen peroxide production. This is L-amino-acid oxidase BmooLAAO-I from Bothrops moojeni (Lance-headed viper).